The following is a 673-amino-acid chain: Annexin A6 (673 aa).

At Ala-2 the chain carries N-acetylalanine. Ser-13 is subject to Phosphoserine. Annexin repeat units lie at residues 20–91 (FDPN…GLMR), 92–163 (PPAY…VLLQ), 175–247 (DLVQ…AVVK), 251–322 (STPE…KLSG), 363–434 (FNPD…GLMM), 435–506 (PPAH…SLAT), 521–595 (EDAQ…AIVQ), and 599–670 (NKPL…ALCG). A Phosphotyrosine modification is found at Tyr-30. N6-acetyllysine is present on residues Lys-63, Lys-68, Lys-75, and Lys-81. Position 201 is a phosphotyrosine (Tyr-201). Lys-306, Lys-370, and Lys-418 each carry N6-acetyllysine. Residue Ser-422 is modified to Phosphoserine. Lys-483 bears the N6-acetyllysine mark. At Ser-537 the chain carries Phosphoserine. The residue at position 620 (Lys-620) is an N6-acetyllysine.

It belongs to the annexin family. In terms of processing, phosphorylated in response to growth factor stimulation.

It is found in the cytoplasm. The protein localises to the melanosome. In terms of biological role, may associate with CD21. May regulate the release of Ca(2+) from intracellular stores. In Homo sapiens (Human), this protein is Annexin A6 (ANXA6).